Here is a 140-residue protein sequence, read N- to C-terminus: Putative nickel-responsive regulator 2 (140 aa).

4 residues coordinate Ni(2+): His81, His92, His94, and Cys100.

It belongs to the transcriptional regulatory CopG/NikR family. Ni(2+) serves as cofactor.

Its function is as follows. Transcriptional regulator. The polypeptide is Putative nickel-responsive regulator 2 (Methanosarcina mazei (strain ATCC BAA-159 / DSM 3647 / Goe1 / Go1 / JCM 11833 / OCM 88) (Methanosarcina frisia)).